We begin with the raw amino-acid sequence, 664 residues long: Protein-arginine deiminase type-3 (664 aa).

Belongs to the protein arginine deiminase family. It depends on Ca(2+) as a cofactor. Epidermis and hair follicles.

Its subcellular location is the cytoplasm. The catalysed reaction is L-arginyl-[protein] + H2O = L-citrullyl-[protein] + NH4(+). Catalyzes the deimination of arginine residues of proteins. The chain is Protein-arginine deiminase type-3 (Padi3) from Rattus norvegicus (Rat).